The following is a 184-amino-acid chain: Putative F-box protein At4g22420 (184 aa).

The 46-residue stretch at 1–46 (MAECPTDLINEMFLRLRATTLKKCRVLSKPCFSLIDSPEKRVIERS) folds into the F-box domain. The disordered stretch occupies residues 68–126 (DDDEEEGNELKKSQARRNGVAKGEGNGNKVNGEAQEEVDDEEDDDDDASKGRGKHSRHV). The segment covering 85–100 (NGVAKGEGNGNKVNGE) has biased composition (low complexity). Residues 101–114 (AQEEVDDEEDDDDD) are compositionally biased toward acidic residues.

This Arabidopsis thaliana (Mouse-ear cress) protein is Putative F-box protein At4g22420.